Reading from the N-terminus, the 501-residue chain is Glycine betaine/proline/ectoine/pipecolic acid transporter OusA (501 aa).

Topologically, residues 1–38 (MKLKRKRVKPIALDDVTIIDDGRLRKAITAAALGNAME) are cytoplasmic. The chain crosses the membrane as a helical span at residues 39–59 (WFDFGVYGFVAYALGQVFFPG). Residues 60–66 (ADPGVQM) lie on the Periplasmic side of the membrane. The helical transmembrane segment at 67-87 (IAALATFSVPFLIRPLGGVFF) threads the bilayer. The Cytoplasmic portion of the chain corresponds to 88-98 (GALGDKYGRQK). A helical transmembrane segment spans residues 99–119 (ILAITIIIMSISTFCIGLIPS). The Periplasmic portion of the chain corresponds to 120 to 122 (YER). Residues 123 to 143 (IGIWAPILLLLAKMAQGFSVG) traverse the membrane as a helical segment. The Cytoplasmic segment spans residues 144-170 (GEYTGASIFVAEYSPDRKRGFMGSWLD). A helical transmembrane segment spans residues 171 to 191 (FGSIAGFVLGAGVVVLISTLI). The Periplasmic segment spans residues 192 to 195 (GEQA). A helical membrane pass occupies residues 196–216 (FLAWGWRLPFFLALPLGLIGL). Residues 217 to 261 (YLRHALEETPAFRQHVEKLEQNDRDGLKAGPGVSFREIATHHWKS) are Cytoplasmic-facing. The chain crosses the membrane as a helical span at residues 262 to 282 (LLVCIGLVIATNVTYYMLLTY). Residues 283 to 298 (MPSYLSHSLHYSENHG) are Periplasmic-facing. The helical transmembrane segment at 299–319 (VLIIIAIMIGMLFVQPVMGLL) threads the bilayer. Residues 320–326 (SDRFGRK) are Cytoplasmic-facing. The chain crosses the membrane as a helical span at residues 327 to 347 (PFVVIGSVAMFFLAVPSFMLI). The Periplasmic portion of the chain corresponds to 348 to 350 (NSD). A helical membrane pass occupies residues 351–371 (IIGLIFLGLLMLAVILNAFTG). The Cytoplasmic segment spans residues 372–391 (VMASTLPALFPTHIRYSALA). Residues 392–412 (SAFNISVLIAGLTPTVAAWLV) form a helical membrane-spanning segment. Over 413–417 (ESSQN) the chain is Periplasmic. A helical membrane pass occupies residues 418–438 (LYMPAYYLMVIAVIGLLTGLF). At 439–501 (MKETANKPLK…LVAQHPRIND (63 aa)) the chain is on the cytoplasmic side. Positions 461-495 (KEILQEHHDNIEHKIEDITQQIAELEAKRQLLVAQ) form a coiled coil.

It belongs to the major facilitator superfamily. Sugar transporter (TC 2.A.1.1) family.

The protein localises to the cell inner membrane. Functionally, involved in uptake and accumulation of various osmoprotectants. Allows the uptake of glycine betaine, proline, ectoine, and pipecolic acid. May be a contributory factor in the infection progression within the host. This chain is Glycine betaine/proline/ectoine/pipecolic acid transporter OusA, found in Dickeya dadantii (strain 3937) (Erwinia chrysanthemi (strain 3937)).